The primary structure comprises 300 residues: Glucose and ribitol dehydrogenase homolog (300 aa).

Residues 1 to 14 (MASQQFPPQNQETQ) show a composition bias toward polar residues. Positions 1 to 23 (MASQQFPPQNQETQPGKEHAMDP) are disordered. 44 to 68 (IVTGGDSGIGRAVCLCFALEGATVA) contributes to the NAD(+) binding site. Serine 192 is a substrate binding site. Residue tyrosine 205 is the Proton acceptor of the active site.

The protein belongs to the short-chain dehydrogenases/reductases (SDR) family.

May act as a short alcohol-polyol-sugar dehydrogenase possibly related to carbohydrate metabolism and the acquisition of desiccation tolerance. May also be involved in signal transduction. This is Glucose and ribitol dehydrogenase homolog from Oryza sativa subsp. japonica (Rice).